Consider the following 143-residue polypeptide: ATP synthase subunit b' (143 aa).

Residues Ala-6–Phe-26 form a helical membrane-spanning segment.

It belongs to the ATPase B chain family. F-type ATPases have 2 components, F(1) - the catalytic core - and F(0) - the membrane proton channel. F(1) has five subunits: alpha(3), beta(3), gamma(1), delta(1), epsilon(1). F(0) has four main subunits: a(1), b(1), b'(1) and c(10-14). The alpha and beta chains form an alternating ring which encloses part of the gamma chain. F(1) is attached to F(0) by a central stalk formed by the gamma and epsilon chains, while a peripheral stalk is formed by the delta, b and b' chains.

The protein resides in the cellular thylakoid membrane. F(1)F(0) ATP synthase produces ATP from ADP in the presence of a proton or sodium gradient. F-type ATPases consist of two structural domains, F(1) containing the extramembraneous catalytic core and F(0) containing the membrane proton channel, linked together by a central stalk and a peripheral stalk. During catalysis, ATP synthesis in the catalytic domain of F(1) is coupled via a rotary mechanism of the central stalk subunits to proton translocation. Functionally, component of the F(0) channel, it forms part of the peripheral stalk, linking F(1) to F(0). The b'-subunit is a diverged and duplicated form of b found in plants and photosynthetic bacteria. The polypeptide is ATP synthase subunit b' (Synechocystis sp. (strain ATCC 27184 / PCC 6803 / Kazusa)).